Consider the following 240-residue polypeptide: UDP-2,3-diacylglucosamine hydrolase (240 aa).

5 residues coordinate Mn(2+): Asp8, His10, Asp41, Asn79, and His114. 79 to 80 (NR) lines the substrate pocket. 5 residues coordinate substrate: Asp122, Ser160, Asn164, Lys167, and His195. Mn(2+)-binding residues include His195 and His197.

It belongs to the LpxH family. Mn(2+) is required as a cofactor.

It is found in the cell inner membrane. The enzyme catalyses UDP-2-N,3-O-bis[(3R)-3-hydroxytetradecanoyl]-alpha-D-glucosamine + H2O = 2-N,3-O-bis[(3R)-3-hydroxytetradecanoyl]-alpha-D-glucosaminyl 1-phosphate + UMP + 2 H(+). It functions in the pathway glycolipid biosynthesis; lipid IV(A) biosynthesis; lipid IV(A) from (3R)-3-hydroxytetradecanoyl-[acyl-carrier-protein] and UDP-N-acetyl-alpha-D-glucosamine: step 4/6. Its function is as follows. Hydrolyzes the pyrophosphate bond of UDP-2,3-diacylglucosamine to yield 2,3-diacylglucosamine 1-phosphate (lipid X) and UMP by catalyzing the attack of water at the alpha-P atom. Involved in the biosynthesis of lipid A, a phosphorylated glycolipid that anchors the lipopolysaccharide to the outer membrane of the cell. The polypeptide is UDP-2,3-diacylglucosamine hydrolase (Escherichia coli (strain UTI89 / UPEC)).